The primary structure comprises 264 residues: Thymidylate synthase (264 aa).

Arg-21 provides a ligand contact to dUMP. Residue His-51 coordinates (6R)-5,10-methylene-5,6,7,8-tetrahydrofolate. 126–127 contributes to the dUMP binding site; it reads RR. The active-site Nucleophile is Cys-146. DUMP contacts are provided by residues 166–169, Asn-177, and 207–209; these read RSCD and HLY. Residue Asp-169 coordinates (6R)-5,10-methylene-5,6,7,8-tetrahydrofolate. Ala-263 contributes to the (6R)-5,10-methylene-5,6,7,8-tetrahydrofolate binding site.

Belongs to the thymidylate synthase family. Bacterial-type ThyA subfamily. In terms of assembly, homodimer.

It is found in the cytoplasm. The catalysed reaction is dUMP + (6R)-5,10-methylene-5,6,7,8-tetrahydrofolate = 7,8-dihydrofolate + dTMP. Its pathway is pyrimidine metabolism; dTTP biosynthesis. In terms of biological role, catalyzes the reductive methylation of 2'-deoxyuridine-5'-monophosphate (dUMP) to 2'-deoxythymidine-5'-monophosphate (dTMP) while utilizing 5,10-methylenetetrahydrofolate (mTHF) as the methyl donor and reductant in the reaction, yielding dihydrofolate (DHF) as a by-product. This enzymatic reaction provides an intracellular de novo source of dTMP, an essential precursor for DNA biosynthesis. This is Thymidylate synthase from Shigella dysenteriae serotype 1 (strain Sd197).